A 208-amino-acid polypeptide reads, in one-letter code: LexA repressor (208 aa).

A DNA-binding region (H-T-H motif) is located at residues 30 to 50 (VREICAAVKLSSTSTVHGHLA). Active-site for autocatalytic cleavage activity residues include Ser-129 and Lys-167.

It belongs to the peptidase S24 family. As to quaternary structure, homodimer.

The catalysed reaction is Hydrolysis of Ala-|-Gly bond in repressor LexA.. Represses a number of genes involved in the response to DNA damage (SOS response), including recA and lexA. In the presence of single-stranded DNA, RecA interacts with LexA causing an autocatalytic cleavage which disrupts the DNA-binding part of LexA, leading to derepression of the SOS regulon and eventually DNA repair. This chain is LexA repressor, found in Lactobacillus helveticus (strain DPC 4571).